A 360-amino-acid polypeptide reads, in one-letter code: Diacylglycerol O-acyltransferase 3 (360 aa).

The interval 153 to 182 (KAKAMKKMTEMDSESSSSSESSDSDCDKGK) is disordered. 4 residues coordinate [2Fe-2S] cluster: Cys-265, Cys-270, Cys-298, and Cys-302.

It belongs to the diacylglycerol acyltransferase family. Requires [2Fe-2S] cluster as cofactor.

It catalyses the reaction an acyl-CoA + a 1,2-diacyl-sn-glycerol = a triacyl-sn-glycerol + CoA. The protein operates within glycerolipid metabolism; triacylglycerol biosynthesis. Its function is as follows. Involved in triacylglycerol (TAG) biosynthesis. Catalyzes the acylation of the sn-3 hydroxy group of sn-1,2-diacylglycerol using acyl-CoA. May preferentially use linolenoyl-CoA as substrate and to a lesser extent linoleoyl-CoA. May contribute to the active recycling of linoleate and linolenate into TAG when seed oil breakdown is blocked. The chain is Diacylglycerol O-acyltransferase 3 from Arabidopsis thaliana (Mouse-ear cress).